The sequence spans 253 residues: Chitooligosaccharide deacetylase (253 aa).

Positions 61 and 126 each coordinate Mg(2+).

This sequence belongs to the YdjC deacetylase family. ChbG subfamily. Homodimer. The cofactor is Mg(2+).

Its subcellular location is the cytoplasm. It catalyses the reaction N,N'-diacetylchitobiose + H2O = N-acetyl-beta-D-glucosaminyl-(1-&gt;4)-D-glucosamine + acetate. The catalysed reaction is diacetylchitobiose-6'-phosphate + H2O = N'-monoacetylchitobiose-6'-phosphate + acetate. It functions in the pathway glycan degradation; chitin degradation. In terms of biological role, involved in the degradation of chitin. ChbG is essential for growth on the acetylated chitooligosaccharides chitobiose and chitotriose but is dispensable for growth on cellobiose and chitosan dimer, the deacetylated form of chitobiose. Deacetylation of chitobiose-6-P and chitotriose-6-P is necessary for both the activation of the chb promoter by the regulatory protein ChbR and the hydrolysis of phosphorylated beta-glucosides by the phospho-beta-glucosidase ChbF. Catalyzes the removal of only one acetyl group from chitobiose-6-P to yield monoacetylchitobiose-6-P, the inducer of ChbR and the substrate of ChbF. The polypeptide is Chitooligosaccharide deacetylase (Yersinia pseudotuberculosis serotype O:1b (strain IP 31758)).